A 314-amino-acid chain; its full sequence is Phospholipid phosphatase-related protein type 5 (314 aa).

The next 6 helical transmembrane spans lie at 5-25, 61-81, 120-140, 194-214, 223-243, and 250-270; these read FSLT…VMLA, IPPV…IIVG, FLGI…AGQV, AALS…TIKA, VLCL…VAEY, and VIAG…CVVN.

This sequence belongs to the PA-phosphatase related phosphoesterase family.

It localises to the cell membrane. Its function is as follows. Induces filopodia formation and promotes neurite growth. The polypeptide is Phospholipid phosphatase-related protein type 5 (Xenopus laevis (African clawed frog)).